A 118-amino-acid chain; its full sequence is Thioredoxin H-type (118 aa).

A Thioredoxin domain is found at 2-114 (AAEEGQVIGC…LQQTIAKHMA (113 aa)). Catalysis depends on nucleophile residues Cys-40 and Cys-43. Cys-40 and Cys-43 are oxidised to a cystine.

Belongs to the thioredoxin family. Plant H-type subfamily.

Its subcellular location is the cytoplasm. Its function is as follows. Participates in various redox reactions through the reversible oxidation of the active center dithiol to a disulfide. The H form is known to activate a number of cytosolic enzymes. This is Thioredoxin H-type from Ricinus communis (Castor bean).